Consider the following 614-residue polypeptide: Putative ABC transporter ATP-binding protein MA_1747 (614 aa).

2 ABC transporter domains span residues 11–251 and 319–552; these read VRLE…KLGI and VLIE…AGLL. Residues 45 to 52 and 352 to 359 each bind ATP; these read GPSGCGKS and GHNGAGKT.

Belongs to the ABC transporter superfamily.

It localises to the cell membrane. In terms of biological role, probably part of an ABC transporter complex. Responsible for energy coupling to the transport system. In Methanosarcina acetivorans (strain ATCC 35395 / DSM 2834 / JCM 12185 / C2A), this protein is Putative ABC transporter ATP-binding protein MA_1747.